A 172-amino-acid chain; its full sequence is GTP-dependent dephospho-CoA kinase (172 aa).

6 residues coordinate GTP: D49, V50, V51, D68, K70, and E120.

Belongs to the GTP-dependent DPCK family.

The catalysed reaction is 3'-dephospho-CoA + GTP = GDP + CoA + H(+). The protein operates within cofactor biosynthesis; coenzyme A biosynthesis. Catalyzes the GTP-dependent phosphorylation of the 3'-hydroxyl group of dephosphocoenzyme A to form coenzyme A (CoA). This is GTP-dependent dephospho-CoA kinase from Pyrobaculum arsenaticum (strain DSM 13514 / JCM 11321 / PZ6).